Consider the following 275-residue polypeptide: NH(3)-dependent NAD(+) synthetase (275 aa).

46–53 provides a ligand contact to ATP; sequence GISGGQDS. Asp-52 contributes to the Mg(2+) binding site. Residue Arg-140 coordinates deamido-NAD(+). Thr-160 serves as a coordination point for ATP. Glu-165 contacts Mg(2+). Residues Lys-173 and Asp-180 each contribute to the deamido-NAD(+) site. The ATP site is built by Lys-189 and Thr-211. 260 to 261 contributes to the deamido-NAD(+) binding site; it reads HK.

Belongs to the NAD synthetase family. As to quaternary structure, homodimer.

The catalysed reaction is deamido-NAD(+) + NH4(+) + ATP = AMP + diphosphate + NAD(+) + H(+). The protein operates within cofactor biosynthesis; NAD(+) biosynthesis; NAD(+) from deamido-NAD(+) (ammonia route): step 1/1. In terms of biological role, catalyzes the ATP-dependent amidation of deamido-NAD to form NAD. Uses ammonia as a nitrogen source. The sequence is that of NH(3)-dependent NAD(+) synthetase from Salmonella dublin (strain CT_02021853).